We begin with the raw amino-acid sequence, 332 residues long: tRNA uridine(34) hydroxylase (332 aa).

One can recognise a Rhodanese domain in the interval 123–217 (SDPEVLLVDT…YLEEVKQEES (95 aa)). The Cysteine persulfide intermediate role is filled by Cys-177. The interval 302 to 332 (SDVGAVIQSRRDNKENLKKSQVKLNNKKYNK) is disordered. Basic and acidic residues predominate over residues 310-319 (SRRDNKENLK).

This sequence belongs to the TrhO family.

It carries out the reaction uridine(34) in tRNA + AH2 + O2 = 5-hydroxyuridine(34) in tRNA + A + H2O. Catalyzes oxygen-dependent 5-hydroxyuridine (ho5U) modification at position 34 in tRNAs. The sequence is that of tRNA uridine(34) hydroxylase from Shewanella woodyi (strain ATCC 51908 / MS32).